A 276-amino-acid polypeptide reads, in one-letter code: Formamidopyrimidine-DNA glycosylase (276 aa).

The Schiff-base intermediate with DNA role is filled by P2. E3 serves as the catalytic Proton donor. K60 functions as the Proton donor; for beta-elimination activity in the catalytic mechanism. DNA is bound by residues H93 and R112. An FPG-type zinc finger spans residues 240–274; sequence FVYGKKDEPCKNCGTMISKIVVGGRGTHFCAKCQT. The active-site Proton donor; for delta-elimination activity is R264.

This sequence belongs to the FPG family. As to quaternary structure, monomer. Requires Zn(2+) as cofactor.

It carries out the reaction Hydrolysis of DNA containing ring-opened 7-methylguanine residues, releasing 2,6-diamino-4-hydroxy-5-(N-methyl)formamidopyrimidine.. The catalysed reaction is 2'-deoxyribonucleotide-(2'-deoxyribose 5'-phosphate)-2'-deoxyribonucleotide-DNA = a 3'-end 2'-deoxyribonucleotide-(2,3-dehydro-2,3-deoxyribose 5'-phosphate)-DNA + a 5'-end 5'-phospho-2'-deoxyribonucleoside-DNA + H(+). Involved in the GO system responsible for removing an oxidatively damaged form of guanine (7,8-dihydro-8-oxoguanine, 8-oxo-dGTP) from DNA and the nucleotide pool. 8-oxo-dGTP is inserted opposite dA and dC residues of template DNA with almost equal efficiency thus leading to A.T to G.C transversions. Involved in base excision repair of DNA damaged by oxidation or by mutagenic agents. Acts as a DNA glycosylase that recognizes and removes damaged bases. Has a preference for oxidized purines, such as 8-oxo-dGTP. Has AP (apurinic/apyrimidinic) lyase activity and introduces nicks in the DNA strand. Cleaves the DNA backbone by beta-delta elimination to generate a single-strand break at the site of the removed base. This chain is Formamidopyrimidine-DNA glycosylase (mutM), found in Bacillus subtilis (strain 168).